The sequence spans 368 residues: UV excision repair protein rhp23 (368 aa).

The Ubiquitin-like domain occupies 1–77; that stretch reads MNLTFKNLQQ…IVCMVSRPKT (77 aa). Composition is skewed to low complexity over residues 76 to 88 and 103 to 124; these read KTST…AASP and APSS…AAPS. A disordered region spans residues 76–134; the sequence is KTSTSTPKSAASPAPNPPASVPEKKVEAPSSTVAESTSTTQTVAAAAPSNPDTTATSEA. Phosphoserine occurs at positions 84 and 87. UBA domains follow at residues 135–185 and 320–360; these read PIDA…LLTG and QEES…LFEH. S364 is subject to Phosphoserine.

It is found in the nucleus. Involved in postreplication repair of UV-damaged DNA. Postreplication repair functions in gap-filling of a daughter strand on replication of damaged DNA. Its function is as follows. Protects ubiquitin chains against dissambly by deubiquitinating enzymes thereby promoting protein degradation. The chain is UV excision repair protein rhp23 (rhp23) from Schizosaccharomyces pombe (strain 972 / ATCC 24843) (Fission yeast).